Here is a 405-residue protein sequence, read N- to C-terminus: S-arrestin (405 aa).

A Phosphothreonine modification is found at Thr-234.

This sequence belongs to the arrestin family. In terms of assembly, monomer. Homodimer. Homotetramer. Interacts with RHO (via the phosphorylated C-terminus).

The protein resides in the cell projection. It is found in the cilium. The protein localises to the photoreceptor outer segment. It localises to the membrane. Its function is as follows. Binds to photoactivated, phosphorylated RHO and terminates RHO signaling via G-proteins by competing with G-proteins for the same binding site on RHO. May play a role in preventing light-dependent degeneration of retinal photoreceptor cells. The protein is S-arrestin (SAG) of Canis lupus familiaris (Dog).